We begin with the raw amino-acid sequence, 290 residues long: MPSQFRTIALIGKPDAPRIADTLAAIHSYLLTSGLEILVEHGCAGLFPRSARTGTMPELARQADIAVVVGGDGTLLGAARSLYAHGVPLVGINLGRLGFLVDISPNEAVDKLHAILSGACRAEERYPLAARLLRNGQTIAQGSAINEVVVHSGSATSMIELETAIDGVFLNSQRSDGLIVSTPTGSTAYALSAGGPILYPTLNATVLAPINPHTLSNRPIVISGDSLVTIAFRPNKEFRAQVSCDNVPFPDVGIEDRIEIRKAERPFRILHPTDYDFFQILRHKLNWSNR.

Residue Asp72 is the Proton acceptor of the active site. NAD(+) contacts are provided by residues 72 to 73 (DG), 146 to 147 (NE), Arg174, Asp176, and 187 to 192 (TAYALS).

The protein belongs to the NAD kinase family. It depends on a divalent metal cation as a cofactor.

Its subcellular location is the cytoplasm. It carries out the reaction NAD(+) + ATP = ADP + NADP(+) + H(+). Its function is as follows. Involved in the regulation of the intracellular balance of NAD and NADP, and is a key enzyme in the biosynthesis of NADP. Catalyzes specifically the phosphorylation on 2'-hydroxyl of the adenosine moiety of NAD to yield NADP. This is NAD kinase from Methylococcus capsulatus (strain ATCC 33009 / NCIMB 11132 / Bath).